The chain runs to 257 residues: Protein-tyrosine-phosphatase IBR5 (257 aa).

One can recognise a Tyrosine-protein phosphatase domain in the interval 49 to 185 (FPSEILPEFL…LQEFEQGIFG (137 aa)). The active-site Phosphocysteine intermediate is the Cys129. The segment at 235–257 (QEFTFGATPPKPTTGGDIAMDGS) is disordered.

It belongs to the protein-tyrosine phosphatase family. As to quaternary structure, interacts with SKP1A/ASK1 and with MPK12. As to expression, expressed in root tips and vasculature, cotyledons, stems, leaves vasculature and hydathodes, flowers, siliques, and seeds.

It is found in the nucleus. It catalyses the reaction O-phospho-L-tyrosyl-[protein] + H2O = L-tyrosyl-[protein] + phosphate. Its function is as follows. Required for the transduction of auxin and abscisic acid (ABA) signaling pathways. Dephosphorylates and inactivates the MAP kinase MPK12. The sequence is that of Protein-tyrosine-phosphatase IBR5 (IBR5) from Arabidopsis thaliana (Mouse-ear cress).